The sequence spans 177 residues: 2-C-methyl-D-erythritol 2,4-cyclodiphosphate synthase (177 aa).

A divalent metal cation is bound by residues D8 and H10. 4-CDP-2-C-methyl-D-erythritol 2-phosphate-binding positions include 8 to 10 (DVH) and 34 to 35 (HS). H42 is a binding site for a divalent metal cation. Residues 56 to 58 (DIG), 61 to 65 (FPDTD), 132 to 135 (TTEE), F139, and R142 each bind 4-CDP-2-C-methyl-D-erythritol 2-phosphate.

This sequence belongs to the IspF family. In terms of assembly, homotrimer. The cofactor is a divalent metal cation.

The catalysed reaction is 4-CDP-2-C-methyl-D-erythritol 2-phosphate = 2-C-methyl-D-erythritol 2,4-cyclic diphosphate + CMP. Its pathway is isoprenoid biosynthesis; isopentenyl diphosphate biosynthesis via DXP pathway; isopentenyl diphosphate from 1-deoxy-D-xylulose 5-phosphate: step 4/6. Functionally, involved in the biosynthesis of isopentenyl diphosphate (IPP) and dimethylallyl diphosphate (DMAPP), two major building blocks of isoprenoid compounds. Catalyzes the conversion of 4-diphosphocytidyl-2-C-methyl-D-erythritol 2-phosphate (CDP-ME2P) to 2-C-methyl-D-erythritol 2,4-cyclodiphosphate (ME-CPP) with a corresponding release of cytidine 5-monophosphate (CMP). This chain is 2-C-methyl-D-erythritol 2,4-cyclodiphosphate synthase, found in Agathobacter rectalis (strain ATCC 33656 / DSM 3377 / JCM 17463 / KCTC 5835 / VPI 0990) (Eubacterium rectale).